The primary structure comprises 194 residues: MRKAERVRKTNETDIELAFTIDGGGQADIKTDVPFMTHMLDLFTKHGQFDLSINAKGDVDIDDHHTTEDIGICLGQALLEALGDKKGIKRYGSAFVPMDEALAQVVIDLSNRPHLEMRADFPAAKVGTFDTELVHEFLWKLALEARMNLHVIVHYGTNTHHMIEAVFKALGRALDEATTIDPRVKGIPSTKGML.

The protein belongs to the imidazoleglycerol-phosphate dehydratase family.

The protein resides in the cytoplasm. The catalysed reaction is D-erythro-1-(imidazol-4-yl)glycerol 3-phosphate = 3-(imidazol-4-yl)-2-oxopropyl phosphate + H2O. The protein operates within amino-acid biosynthesis; L-histidine biosynthesis; L-histidine from 5-phospho-alpha-D-ribose 1-diphosphate: step 6/9. This is Imidazoleglycerol-phosphate dehydratase from Bacillus subtilis (strain 168).